Consider the following 66-residue polypeptide: Large ribosomal subunit protein bL33c (66 aa).

It belongs to the bacterial ribosomal protein bL33 family.

The protein resides in the plastid. It is found in the chloroplast. The sequence is that of Large ribosomal subunit protein bL33c from Calycanthus floridus var. glaucus (Eastern sweetshrub).